The sequence spans 292 residues: uncharacterized protein (292 aa).

Residues 1-58 (MEWEQLEYFQTLARMQHVTKAAKSLSITQPALSRSIARLENHLGVPLFDRQGRSISLN) form the HTH lysR-type domain. A DNA-binding region (H-T-H motif) is located at residues 18–37 (VTKAAKSLSITQPALSRSIA).

The protein belongs to the LysR transcriptional regulatory family.

This is an uncharacterized protein from Bacillus subtilis (strain 168).